We begin with the raw amino-acid sequence, 118 residues long: Ribonuclease P protein component (118 aa).

Belongs to the RnpA family. Consists of a catalytic RNA component (M1 or rnpB) and a protein subunit.

The enzyme catalyses Endonucleolytic cleavage of RNA, removing 5'-extranucleotides from tRNA precursor.. RNaseP catalyzes the removal of the 5'-leader sequence from pre-tRNA to produce the mature 5'-terminus. It can also cleave other RNA substrates such as 4.5S RNA. The protein component plays an auxiliary but essential role in vivo by binding to the 5'-leader sequence and broadening the substrate specificity of the ribozyme. This chain is Ribonuclease P protein component, found in Mycoplasma pneumoniae (strain ATCC 29342 / M129 / Subtype 1) (Mycoplasmoides pneumoniae).